Reading from the N-terminus, the 318-residue chain is MQVTFLGTSSGVPTRARNVSAVALRLPQRAELWLFDCGEGTQHQFLRSDLRLSQLRRVFVSHMHGDHVFGLPGLLASLGLSGNSNGVDLYGPDPLESYLQGVLRNSSTRIGYPLKVHRVRDAAEQNLIVFEDKDILVRCTPLTHRVPAYAYRVEQKPKPGHFNLERAQRLGIPPGPVYAALKRGEQVSLDDGRVVDGRDFCGPDRPGASIVFCTDTVFSEAAVALAAGADLLIHEATFAHSEAEMAYQKQHSTSTMAAQTAAEAGVGKLVLTHLSPRYAPGNPVTPNDLLREAQAIFSNTILAKDFLSFEVAPRCNSS.

7 residues coordinate Zn(2+): His-62, His-64, Asp-66, His-67, His-144, Asp-215, and His-273. Residue Asp-66 is the Proton acceptor of the active site.

Belongs to the RNase Z family. Homodimer. The cofactor is Zn(2+).

The catalysed reaction is Endonucleolytic cleavage of RNA, removing extra 3' nucleotides from tRNA precursor, generating 3' termini of tRNAs. A 3'-hydroxy group is left at the tRNA terminus and a 5'-phosphoryl group is left at the trailer molecule.. Functionally, zinc phosphodiesterase, which displays some tRNA 3'-processing endonuclease activity. Probably involved in tRNA maturation, by removing a 3'-trailer from precursor tRNA. The protein is Ribonuclease Z of Prochlorococcus marinus (strain MIT 9303).